The sequence spans 134 residues: Profilin-2 (134 aa).

Cys-13 and Cys-118 are joined by a disulfide. The short motif at 84 to 100 (AVIRGKKGSGGITIKKT) is the Involved in PIP2 interaction element. Thr-114 is modified (phosphothreonine).

The protein belongs to the profilin family. Occurs in many kinds of cells as a complex with monomeric actin in a 1:1 ratio. In terms of processing, phosphorylated by MAP kinases.

The protein localises to the cytoplasm. It localises to the cytoskeleton. Its function is as follows. Binds to actin and affects the structure of the cytoskeleton. At high concentrations, profilin prevents the polymerization of actin, whereas it enhances it at low concentrations. This chain is Profilin-2, found in Olea europaea (Common olive).